A 194-amino-acid polypeptide reads, in one-letter code: Probable RNA 2'-phosphotransferase (194 aa).

Belongs to the KptA/TPT1 family.

In terms of biological role, removes the 2'-phosphate from RNA via an intermediate in which the phosphate is ADP-ribosylated by NAD followed by a presumed transesterification to release the RNA and generate ADP-ribose 1''-2''-cyclic phosphate (APPR&gt;P). May function as an ADP-ribosylase. The chain is Probable RNA 2'-phosphotransferase from Burkholderia lata (strain ATCC 17760 / DSM 23089 / LMG 22485 / NCIMB 9086 / R18194 / 383).